The sequence spans 155 residues: Ribonuclease H (155 aa).

Residues 1-146 form the RNase H type-1 domain; the sequence is MNALFAWTDG…ADELARAGMA (146 aa). Mg(2+)-binding residues include aspartate 9, glutamate 52, aspartate 74, and aspartate 138.

The protein belongs to the RNase H family. In terms of assembly, monomer. Mg(2+) serves as cofactor.

The protein localises to the cytoplasm. It carries out the reaction Endonucleolytic cleavage to 5'-phosphomonoester.. Endonuclease that specifically degrades the RNA of RNA-DNA hybrids. This Paracoccus denitrificans (strain Pd 1222) protein is Ribonuclease H.